Here is a 742-residue protein sequence, read N- to C-terminus: Protein-associating with the carboxyl-terminal domain of ezrin (742 aa).

The N-myristoyl glycine moiety is linked to residue G2. One can recognise a Protein kinase domain in the interval 2–245; sequence GSENSALKSY…LCTLLSHDFF (244 aa). HEAT repeat units follow at residues 199–238, 285–323, 333–370, and 372–409; these read ESLL…ALCT, LIAS…HAQG, LFQS…HFTQ, and QLKK…LLGP. S439 is modified (phosphoserine). Disordered stretches follow at residues 506–544, 568–598, and 629–652; these read LSDV…QTVN, SSWD…TSGE, and GDDA…VPSE. Over residues 529–539 the composition is skewed to acidic residues; that stretch reads WPDWSEPEEPE. Residues 548-742 are interaction with EZR; it reads WPREPCDDVK…GELNWEDNNW (195 aa). The residue at position 707 (S707) is a Phosphoserine. The disordered stretch occupies residues 723-742; sequence EGEAEGWEEEGELNWEDNNW.

This sequence belongs to the protein kinase superfamily. Interacts with EZR/VIL2 C-terminal domain. May be myristoylated; myristoylation may target it to Golgi compartment. In terms of processing, phosphorylated. In terms of tissue distribution, ubiquitously expressed.

The protein resides in the cytoplasm. Its subcellular location is the golgi apparatus. It is found in the cell projection. The protein localises to the lamellipodium. Functionally, may play a role in regulating cell adhesion/migration complexes in migrating cells. The protein is Protein-associating with the carboxyl-terminal domain of ezrin (SCYL3) of Homo sapiens (Human).